We begin with the raw amino-acid sequence, 138 residues long: Superoxide dismutase [Mn] (138 aa).

Mn(2+)-binding residues include His-2, His-49, Asp-133, and His-137.

This sequence belongs to the iron/manganese superoxide dismutase family. The cofactor is Mn(2+).

It carries out the reaction 2 superoxide + 2 H(+) = H2O2 + O2. Its function is as follows. Destroys superoxide anion radicals which are normally produced within the cells and which are toxic to biological systems. This is Superoxide dismutase [Mn] (sodA) from Mycobacterium szulgai.